The chain runs to 387 residues: Phosphoglycerate kinase (387 aa).

Substrate is bound by residues 21–23, arginine 36, 59–62, arginine 113, and arginine 146; these read DLN and HLGR. ATP contacts are provided by residues lysine 197, glutamate 314, and 340–343; that span reads GGDT.

This sequence belongs to the phosphoglycerate kinase family. Monomer.

Its subcellular location is the cytoplasm. It catalyses the reaction (2R)-3-phosphoglycerate + ATP = (2R)-3-phospho-glyceroyl phosphate + ADP. The protein operates within carbohydrate degradation; glycolysis; pyruvate from D-glyceraldehyde 3-phosphate: step 2/5. The chain is Phosphoglycerate kinase from Tolumonas auensis (strain DSM 9187 / NBRC 110442 / TA 4).